The following is a 473-amino-acid chain: NAD-dependent protein deacetylase SRT1 (473 aa).

A Deacetylase sirtuin-type domain is found at 27–267 (SHLLQCKIEE…AGVMESLNMK (241 aa)). NAD(+) is bound by residues 52–71 (GAGI…KGIW) and 114–117 (QNVD). The active-site Proton acceptor is the H134. Residues C142, C145, C167, and C172 each coordinate Zn(2+). NAD(+) contacts are provided by residues 209 to 211 (GTS), 235 to 237 (NLQ), and V253. The segment at 447–473 (LEGSGTSRKRSRTGKRKSKALAEETKA) is disordered. Over residues 453–465 (SRKRSRTGKRKSK) the composition is skewed to basic residues.

It belongs to the sirtuin family. Class IV subfamily. As to quaternary structure, binds to the promoter region of genes influenced by ethylene. Interacts with ENAP1; this interaction is enhanced in the presence of ethylene. It depends on Zn(2+) as a cofactor.

It localises to the nucleus. It carries out the reaction N(6)-acetyl-L-lysyl-[protein] + NAD(+) + H2O = 2''-O-acetyl-ADP-D-ribose + nicotinamide + L-lysyl-[protein]. Its function is as follows. NAD-dependent protein deacetylase. Has deacetylase activity towards H3K9Ac. May have a function in the safeguard against genome instability and DNA damage to ensure plant cell growth. Involved in responses to ethylene leading to the transcriptional repression of some ethylene-responsive genes via the regulation of histone acetylation H3K9Ac. The polypeptide is NAD-dependent protein deacetylase SRT1 (Arabidopsis thaliana (Mouse-ear cress)).